A 597-amino-acid chain; its full sequence is Elongation factor 4 (597 aa).

In terms of domain architecture, tr-type G spans 4–181 (SKIRNFSIIA…EIVDKISYPI (178 aa)). Residues 16 to 21 (DHGKST) and 128 to 131 (NKID) each bind GTP.

This sequence belongs to the TRAFAC class translation factor GTPase superfamily. Classic translation factor GTPase family. LepA subfamily.

The protein localises to the cell membrane. The catalysed reaction is GTP + H2O = GDP + phosphate + H(+). In terms of biological role, required for accurate and efficient protein synthesis under certain stress conditions. May act as a fidelity factor of the translation reaction, by catalyzing a one-codon backward translocation of tRNAs on improperly translocated ribosomes. Back-translocation proceeds from a post-translocation (POST) complex to a pre-translocation (PRE) complex, thus giving elongation factor G a second chance to translocate the tRNAs correctly. Binds to ribosomes in a GTP-dependent manner. This chain is Elongation factor 4, found in Mycoplasmopsis pulmonis (strain UAB CTIP) (Mycoplasma pulmonis).